The chain runs to 148 residues: Hemoglobin subunit alpha (148 aa).

Residue Ser1 is modified to N-acetylserine. A Globin domain is found at 8-148 (DYSAADRAEL…VCHELSSRYR (141 aa)). His66 is an O2 binding site. A heme b-binding site is contributed by His95.

The protein belongs to the globin family. As to quaternary structure, heterotetramer of two alpha chains and two beta chains. Red blood cells.

In terms of biological role, involved in oxygen transport from the lung to the various peripheral tissues. In Heterodontus portusjacksoni (Port Jackson shark), this protein is Hemoglobin subunit alpha (HBA).